A 137-amino-acid chain; its full sequence is ATP synthase epsilon chain, chloroplastic (137 aa).

It belongs to the ATPase epsilon chain family. F-type ATPases have 2 components, CF(1) - the catalytic core - and CF(0) - the membrane proton channel. CF(1) has five subunits: alpha(3), beta(3), gamma(1), delta(1), epsilon(1). CF(0) has three main subunits: a, b and c.

It localises to the plastid. It is found in the chloroplast thylakoid membrane. Functionally, produces ATP from ADP in the presence of a proton gradient across the membrane. The chain is ATP synthase epsilon chain, chloroplastic from Medicago sativa (Alfalfa).